The chain runs to 435 residues: GTPase Der (435 aa).

EngA-type G domains lie at 2-167 (ATVV…RESG) and 178-351 (PKIA…ESYC). GTP-binding positions include 8 to 15 (GRANVGKS), 55 to 59 (DTCGV), 118 to 121 (NKSE), 184 to 191 (GKPNVGKS), 231 to 235 (DTAGM), and 297 to 300 (NKFD). The KH-like domain occupies 352 to 435 (RKVPQQLLSK…PLVIEFKSRR (84 aa)).

Belongs to the TRAFAC class TrmE-Era-EngA-EngB-Septin-like GTPase superfamily. EngA (Der) GTPase family. In terms of assembly, associates with the 50S ribosomal subunit.

GTPase that plays an essential role in the late steps of ribosome biogenesis. The polypeptide is GTPase Der (Pseudothermotoga lettingae (strain ATCC BAA-301 / DSM 14385 / NBRC 107922 / TMO) (Thermotoga lettingae)).